The chain runs to 536 residues: L-ornithine N(5)-monooxygenase SIDA (536 aa).

Positions 1-25 (MSPHRETTGDESTTTTVPQNGTNGA) are disordered. FAD is bound by residues 115–123 (EKQTRFAWH) and Gln-134. Lys-139 is a binding site for L-ornithine. Val-200 contributes to the FAD binding site. Residue Arg-310 coordinates NADP(+). L-ornithine contacts are provided by residues 324–327 (NSIF) and Asn-354. Position 515–517 (515–517 (TLL)) interacts with FAD. Ser-518 serves as a coordination point for L-ornithine.

It belongs to the lysine N(6)-hydroxylase/L-ornithine N(5)-oxygenase family. Homotetramer. Requires FAD as cofactor.

The enzyme catalyses L-ornithine + NADH + O2 = N(5)-hydroxy-L-ornithine + NAD(+) + H2O. The catalysed reaction is L-ornithine + NADPH + O2 = N(5)-hydroxy-L-ornithine + NADP(+) + H2O. It participates in siderophore biosynthesis. L-ornithine N(5)-monooxygenase; part of the gene cluster that mediates the biosynthesis of at least 11 siderophores, including beauverichelin A, dimerumic acid (DA), Na-dimethyl coprogen (NADC), eleutherazine B, ferricrocin (FC), fusarinine A, fusarinine C (FsC), metachelin A, mevalonolactone, rhodotorulic acid (RA) and tenellin. This cocktail of siderophores for iron metabolism is essential for virulence, and more specifically for the fungal virulence in penetrating through the host cuticle. Siderophore synthesis is also involved in conidial germination under iron-deficient conditions. SIDA initiates the biosynthesis of these siderophores with the enzymatic hydroxylation of ornithine. SIDA is indispensable for the production of most siderophores including fusarinine C and ferricrocin but not mevalonolactone and eleutherazine B. However, SIDA mediates the metabolic interplay between synthesis of mevalonolactone and eleutherazine B and other siderophores. This is L-ornithine N(5)-monooxygenase SIDA from Beauveria bassiana (strain ARSEF 2860) (White muscardine disease fungus).